Here is a 469-residue protein sequence, read N- to C-terminus: MTSQLHKKGEAWSARFSEPMSELVKRYTSSVFFDKRLALVDIAGSLAHAGMLAAQKIISADDLAAIEHGMAQIKGEIERGEFEWQLDLEDVHLNIEARLTALIGDAGKRLHTGRSRNDQVATDIRLWLRGEIDRIGGLLNDLRGALIDLAEQNADTILPGFTHLQVAQPVTFGHHLLAYVEMFSRDAERMRDCRARVNRLPLGAAALAGTSYPIDRHAVAKTLGFDGICANSLDAVSDRDFAIEFTAAAALVMTHVSRFSEELVLWMSPRVGFIDIADRFCTGSSIMPQKKNPDVPELARGKTGRVNGHLMALLTLMKGQPLAYNKDNQEDKEPLFDTVDTVADTLRIFAEMVAGITVKPDAMRAAALQGFSTATDLADYLVKRGLPFRDAHEAVAHAVKICDARGIDLADLTLDEMKQELPNVAHLIGSDVFDYLTLEGSVASRSHPGGTAPDQVRAAAKAARAALGK.

It belongs to the lyase 1 family. Argininosuccinate lyase subfamily.

The protein resides in the cytoplasm. It catalyses the reaction 2-(N(omega)-L-arginino)succinate = fumarate + L-arginine. The protein operates within amino-acid biosynthesis; L-arginine biosynthesis; L-arginine from L-ornithine and carbamoyl phosphate: step 3/3. The chain is Argininosuccinate lyase from Burkholderia thailandensis (strain ATCC 700388 / DSM 13276 / CCUG 48851 / CIP 106301 / E264).